The following is a 483-amino-acid chain: Membrane-bound lytic murein transglycosylase F (483 aa).

Positions 1–18 (MKGLIARFIAGFALLLWA) are cleaved as a signal peptide. The tract at residues 19-267 (WDMVFPWQQL…RIEEKYFNHL (249 aa)) is non-LT domain. The LT domain stretch occupies residues 269–483 (HFDYVDIQSY…SKESDSTLKE (215 aa)). The active site involves E312. The interval 458–483 (QQIQNNEEQPSVPQEISKESDSTLKE) is disordered. A compositionally biased stretch (basic and acidic residues) spans 473-483 (ISKESDSTLKE).

The protein in the N-terminal section; belongs to the bacterial solute-binding protein 3 family. In the C-terminal section; belongs to the transglycosylase Slt family.

The protein resides in the cell outer membrane. It catalyses the reaction Exolytic cleavage of the (1-&gt;4)-beta-glycosidic linkage between N-acetylmuramic acid (MurNAc) and N-acetylglucosamine (GlcNAc) residues in peptidoglycan, from either the reducing or the non-reducing ends of the peptidoglycan chains, with concomitant formation of a 1,6-anhydrobond in the MurNAc residue.. In terms of biological role, murein-degrading enzyme that degrades murein glycan strands and insoluble, high-molecular weight murein sacculi, with the concomitant formation of a 1,6-anhydromuramoyl product. Lytic transglycosylases (LTs) play an integral role in the metabolism of the peptidoglycan (PG) sacculus. Their lytic action creates space within the PG sacculus to allow for its expansion as well as for the insertion of various structures such as secretion systems and flagella. This Actinobacillus pleuropneumoniae serotype 3 (strain JL03) protein is Membrane-bound lytic murein transglycosylase F.